The sequence spans 149 residues: MSKKASILVIQGPNLNLLGTREPDVYGKTTLEDIHQKLGELAKAQSVDLSTFQSNHEGELIDRIQKAKQDGVDFIIINPGAFTHTSVALRDVLAGVAIPFTEVHLSNIHQREEFRKHSYLSDIANGVICGLGAIGYELALQAAIARLQR.

Catalysis depends on tyrosine 26, which acts as the Proton acceptor. 3 residues coordinate substrate: asparagine 78, histidine 84, and aspartate 91. Histidine 104 (proton donor) is an active-site residue. Substrate is bound by residues 105-106 and arginine 115; that span reads LS.

The protein belongs to the type-II 3-dehydroquinase family. Homododecamer.

The catalysed reaction is 3-dehydroquinate = 3-dehydroshikimate + H2O. It functions in the pathway metabolic intermediate biosynthesis; chorismate biosynthesis; chorismate from D-erythrose 4-phosphate and phosphoenolpyruvate: step 3/7. In terms of biological role, catalyzes a trans-dehydration via an enolate intermediate. The polypeptide is 3-dehydroquinate dehydratase (Polynucleobacter asymbioticus (strain DSM 18221 / CIP 109841 / QLW-P1DMWA-1) (Polynucleobacter necessarius subsp. asymbioticus)).